The primary structure comprises 873 residues: Coatomer subunit gamma-2 (873 aa).

The span at 1-11 shows a compositional bias: basic and acidic residues; the sequence is MIKKFDKKDEE. A disordered region spans residues 1 to 21; it reads MIKKFDKKDEESGSGSNPFQN. HEAT repeat units follow at residues 64–101, 283–320, 321–355, 356–392, 394–430, and 467–504; these read TEAT…ISED, RELA…KHPS, AVTA…GSES, SVDR…KYPR, HSAM…ENPE, and PQPS…QNDD.

This sequence belongs to the COPG family. As to quaternary structure, oligomeric complex.

The protein resides in the cytoplasm. Its subcellular location is the golgi apparatus membrane. The protein localises to the cytoplasmic vesicle. It is found in the COPI-coated vesicle membrane. In terms of biological role, the coatomer is a cytosolic protein complex that binds to dilysine motifs and reversibly associates with Golgi non-clathrin-coated vesicles, which further mediate biosynthetic protein transport from the ER, via the Golgi up to the trans Golgi network. Coatomer complex is required for budding from Golgi membranes, and is essential for the retrograde Golgi-to-ER transport of dilysine-tagged proteins. This is Coatomer subunit gamma-2 (copg2) from Takifugu rubripes (Japanese pufferfish).